Consider the following 420-residue polypeptide: Exodeoxyribonuclease 7 large subunit (420 aa).

It belongs to the XseA family. Heterooligomer composed of large and small subunits.

The protein localises to the cytoplasm. It catalyses the reaction Exonucleolytic cleavage in either 5'- to 3'- or 3'- to 5'-direction to yield nucleoside 5'-phosphates.. Its function is as follows. Bidirectionally degrades single-stranded DNA into large acid-insoluble oligonucleotides, which are then degraded further into small acid-soluble oligonucleotides. The protein is Exodeoxyribonuclease 7 large subunit of Helicobacter pylori (strain ATCC 700392 / 26695) (Campylobacter pylori).